The primary structure comprises 352 residues: MLISQRPTLTEEVIAENRSKFTIEPLEPGFGYTLGNSLRRTLLSSIPGAAVTSIRIDGVLHEFTTVPGVKEDVTDIILNLKGLVVSSEEDEPVTMYVRKQGPGTVTAGDIVPPAGVVVHNPDMHIATLNDKGKLEIELVVERGRGYVPAVQNKASGAEIGRIPVDSIYSPVLKVTYKVEATRVEQRTDFDRLILDVETKNSISARDALASAGKTLVELFGLARELNVEAEGIEIGPSPAEADHIASFGLPIEDLDLTVRSYNCLKREGVHTVGELVARTESDLLDIRNFGQKSIDEVKVKLHALGLSLKDSPASFDPSSVVGYDASTGTWSDSGTFSDNDGGEQDYAETEQL.

Residues methionine 1 to asparagine 226 form an alpha N-terminal domain (alpha-NTD) region. The tract at residues histidine 243–leucine 352 is alpha C-terminal domain (alpha-CTD). A disordered region spans residues aspartate 324–leucine 352. Residues serine 326–aspartate 338 show a composition bias toward polar residues. The segment covering aspartate 340–leucine 352 has biased composition (acidic residues).

Belongs to the RNA polymerase alpha chain family. As to quaternary structure, homodimer. The RNAP catalytic core consists of 2 alpha, 1 beta, 1 beta' and 1 omega subunit. When a sigma factor is associated with the core the holoenzyme is formed, which can initiate transcription.

It catalyses the reaction RNA(n) + a ribonucleoside 5'-triphosphate = RNA(n+1) + diphosphate. DNA-dependent RNA polymerase catalyzes the transcription of DNA into RNA using the four ribonucleoside triphosphates as substrates. In Nocardia farcinica (strain IFM 10152), this protein is DNA-directed RNA polymerase subunit alpha.